Reading from the N-terminus, the 290-residue chain is Pyridoxal kinase PdxY (290 aa).

Residues S12 and 47 to 48 each bind substrate; that span reads TQ. ATP contacts are provided by residues D114, E151, K184, and 211-214; that span reads RPLL. D225 is a binding site for substrate.

Belongs to the pyridoxine kinase family. PdxY subfamily. In terms of assembly, homodimer. The cofactor is Mg(2+).

The enzyme catalyses pyridoxal + ATP = pyridoxal 5'-phosphate + ADP + H(+). Its pathway is cofactor metabolism; pyridoxal 5'-phosphate salvage; pyridoxal 5'-phosphate from pyridoxal: step 1/1. Pyridoxal kinase involved in the salvage pathway of pyridoxal 5'-phosphate (PLP). Catalyzes the phosphorylation of pyridoxal to PLP. This chain is Pyridoxal kinase PdxY, found in Pseudomonas entomophila (strain L48).